Reading from the N-terminus, the 459-residue chain is Peptidyl-prolyl cis-trans isomerase FKBP4 (459 aa).

Methionine 1 carries the post-translational modification N-acetylmethionine; in peptidyl-prolyl cis-trans isomerase FKBP4; alternate. The segment at 1–22 (MTAEETKAAESGAQSAPLRLEG) is disordered. Threonine 2 is subject to N-acetylthreonine; in peptidyl-prolyl cis-trans isomerase FKBP4, N-terminally processed; partial. The region spanning 50–138 (GDRVFVHYTG…VFEVELFEFK (89 aa)) is the PPIase FKBP-type 1 domain. Position 143 is a phosphothreonine (threonine 143). Positions 167-253 (GALVEVALEG…KYEIHLKSFE (87 aa)) constitute a PPIase FKBP-type 2 domain. Tyrosine 220 carries the post-translational modification Phosphotyrosine. Positions 267–400 (LEQSTIVKER…AQLVVCQQRI (134 aa)) are interaction with tubulin. 3 TPR repeats span residues 270–303 (STIV…LEYE), 319–352 (LASH…DSNN), and 354–386 (KGLF…YPSN). An N6-acetyllysine modification is found at lysine 282. Arginine 373 carries the post-translational modification Omega-N-methylarginine. Positions 423 to 459 (TKAKATVAAGDQPADAEMRDEPKNDVAGGQPQVEAEA) are disordered.

In terms of assembly, homodimer. Interacts with GLMN. Associates with HSP90AA1 and HSP70 in steroid hormone receptor complexes. Also interacts with peroxisomal phytanoyl-CoA alpha-hydroxylase (PHYH). Interacts with NR3C1 and dynein. Interacts with HSF1 in the HSP90 complex. Associates with tubulin. Interacts with MAPT/TAU. Interacts (via TPR domain) with S100A1, S100A2 and S100A6; the interaction is Ca(2+) dependent. Interaction with S100A1 and S100A2 (but not with S100A6) leads to inhibition of FKBP4-HSP90 interaction. Interacts with dynein; causes partially NR3C1 transport to the nucleus.

The protein resides in the cytoplasm. The protein localises to the cytosol. Its subcellular location is the mitochondrion. It localises to the nucleus. It is found in the cytoskeleton. The catalysed reaction is [protein]-peptidylproline (omega=180) = [protein]-peptidylproline (omega=0). Inhibited by FK506. In terms of biological role, immunophilin protein with PPIase and co-chaperone activities. Component of unligated steroid receptors heterocomplexes through interaction with heat-shock protein 90 (HSP90). May play a role in the intracellular trafficking of heterooligomeric forms of steroid hormone receptors between cytoplasm and nuclear compartments. The isomerase activity controls neuronal growth cones via regulation of TRPC1 channel opening. Also acts as a regulator of microtubule dynamics by inhibiting MAPT/TAU ability to promote microtubule assembly. May have a protective role against oxidative stress in mitochondria. This chain is Peptidyl-prolyl cis-trans isomerase FKBP4 (FKBP4), found in Bos taurus (Bovine).